Reading from the N-terminus, the 81-residue chain is MKTLLLTLVVVTIVCLDLGYTLKCNKLVPLFYKTCPAGKNLCYKMFMVATPKVPVKRGCIDVCPKSSLLVKYVCCNTDRCN.

An N-terminal signal peptide occupies residues 1 to 21 (MKTLLLTLVVVTIVCLDLGYT). Disulfide bonds link C24/C42, C35/C59, C63/C74, and C75/C80.

This sequence belongs to the three-finger toxin family. Short-chain subfamily. Type IA cytotoxin sub-subfamily. Monomer in solution; Homodimer and oligomer in the presence of negatively charged lipids forming a pore with a size ranging between 20 and 30 Angstroms. Interacts with Kv channel-interacting protein 1 (KCNIP1) in a calcium-independent manner. As to expression, expressed by the venom gland.

Its subcellular location is the secreted. It localises to the target cell membrane. In terms of biological role, basic protein that binds to cell membrane and depolarizes cardiomyocytes. This cytotoxin also possesses lytic activity on many other cells, including red blood cells. Interaction with sulfatides in the cell membrane induces pore formation and cell internalization. Cytotoxicity is due to pore formation, and to another mechanism independent of membrane-damaging activity. When internalized, it targets the mitochondrial membrane and induces mitochondrial swelling and fragmentation. It inhibits protein kinases C. It binds to the integrin alpha-V/beta-3 (ITGAV/ITGB3) with a moderate affinity. It also binds with high affinity to heparin. This chain is Cytotoxin 3, found in Naja atra (Chinese cobra).